Reading from the N-terminus, the 192-residue chain is Leucyl/phenylalanyl-tRNA--protein transferase (192 aa).

This sequence belongs to the L/F-transferase family.

It localises to the cytoplasm. It carries out the reaction N-terminal L-lysyl-[protein] + L-leucyl-tRNA(Leu) = N-terminal L-leucyl-L-lysyl-[protein] + tRNA(Leu) + H(+). The enzyme catalyses N-terminal L-arginyl-[protein] + L-leucyl-tRNA(Leu) = N-terminal L-leucyl-L-arginyl-[protein] + tRNA(Leu) + H(+). It catalyses the reaction L-phenylalanyl-tRNA(Phe) + an N-terminal L-alpha-aminoacyl-[protein] = an N-terminal L-phenylalanyl-L-alpha-aminoacyl-[protein] + tRNA(Phe). Functions in the N-end rule pathway of protein degradation where it conjugates Leu, Phe and, less efficiently, Met from aminoacyl-tRNAs to the N-termini of proteins containing an N-terminal arginine or lysine. The polypeptide is Leucyl/phenylalanyl-tRNA--protein transferase (Synechococcus sp. (strain JA-3-3Ab) (Cyanobacteria bacterium Yellowstone A-Prime)).